We begin with the raw amino-acid sequence, 492 residues long: MELNQPPLPTEIDDDAYHKPSFNDLGLKESVLKSVYEAGFTSPSPIQEKAIPAVLQGRDVIAQAQTGTGKTAAFALPIINNLKNNHTIEALVITPTRELAMQISDEIFKLGKHTRTKTVCVYGGQSVKKQCEFIKKNPQVMIATPGRLLDHLKNERIHKFVPKVVVLDESDEMLDMGFLDDIEEIFDYLPSEAQILLFSATMPEPIKRLADKILENPIKIHIAPSNITNTDITQRFYVINEHERAEAIMRLLDTQAPKKSIVFTRTKKEADELHQFLASKNYKSTALHGDMDQRDRRASIMAFKKNDADVLVATDVASRGLDISGVSHVFNYHLPLNTESYIHRIGRTGRAGKKGMAITLVTPLEYKELLRMQKEIDSEIELFEIPTINENQIIKTLHDAKVSEGIISLYEQLTEIFEPSQLVLKLLSLQFETSKIGLNQQEIDAIQNPKEKTPKPSHKKTPQHERARSFKKGQHRDRHPKTNHHSKKPKRR.

The short motif at 20–48 (PSFNDLGLKESVLKSVYEAGFTSPSPIQE) is the Q motif element. The 170-residue stretch at 51–220 (IPAVLQGRDV…DKILENPIKI (170 aa)) folds into the Helicase ATP-binding domain. 64–71 (AQTGTGKT) contacts ATP. Residues 168–171 (DESD) carry the DEAD box motif. The region spanning 231–393 (DITQRFYVIN…EIPTINENQI (163 aa)) is the Helicase C-terminal domain. Positions 445-492 (AIQNPKEKTPKPSHKKTPQHERARSFKKGQHRDRHPKTNHHSKKPKRR) are disordered. A compositionally biased stretch (basic residues) spans 469-492 (SFKKGQHRDRHPKTNHHSKKPKRR).

The protein belongs to the DEAD box helicase family. As to quaternary structure, homodimer. Interacts with RNase J (rnj), might be a member of a minimal RNA degradosome complex.

The protein resides in the cytoplasm. It carries out the reaction ATP + H2O = ADP + phosphate + H(+). In terms of biological role, DEAD-box RNA helicase probably involved in RNA degradation. Unwinds dsRNA in both 5'- and 3'-directions. Background RNA-dependent ATPase activity is stimulated about 5-fold by RNaseJ (rnj). Stimulates the dsRNase activity of RNase J. The chain is DEAD-box ATP-dependent RNA helicase RhpA (rhpA) from Helicobacter pylori (strain B128).